We begin with the raw amino-acid sequence, 156 residues long: Small ribosomal subunit protein uS7 (156 aa).

This sequence belongs to the universal ribosomal protein uS7 family. Part of the 30S ribosomal subunit. Contacts proteins S9 and S11.

Functionally, one of the primary rRNA binding proteins, it binds directly to 16S rRNA where it nucleates assembly of the head domain of the 30S subunit. Is located at the subunit interface close to the decoding center, probably blocks exit of the E-site tRNA. This Enterobacter sp. (strain 638) protein is Small ribosomal subunit protein uS7.